Consider the following 332-residue polypeptide: L-lactate dehydrogenase (332 aa).

NAD(+) is bound by residues 29 to 57 (GQVG…CADK) and R99. Substrate-binding residues include R106, N138, and R169. N138 is an NAD(+) binding site. Residue H193 is the Proton acceptor of the active site. Residue T248 participates in substrate binding.

This sequence belongs to the LDH/MDH superfamily. LDH family. Homotetramer.

The protein localises to the cytoplasm. The enzyme catalyses (S)-lactate + NAD(+) = pyruvate + NADH + H(+). Its pathway is fermentation; pyruvate fermentation to lactate; (S)-lactate from pyruvate: step 1/1. The polypeptide is L-lactate dehydrogenase (Drosophila melanogaster (Fruit fly)).